Consider the following 150-residue polypeptide: uncharacterized protein (150 aa).

The region spanning 4-149 is the N-acetyltransferase domain; the sequence is IQIRNYQPGD…TNFYMRYKPQ (146 aa).

Belongs to the acetyltransferase family.

This is an uncharacterized protein from Escherichia coli (strain K12).